A 560-amino-acid polypeptide reads, in one-letter code: Proline--tRNA ligase (560 aa).

Belongs to the class-II aminoacyl-tRNA synthetase family. ProS type 1 subfamily. Homodimer.

Its subcellular location is the cytoplasm. It catalyses the reaction tRNA(Pro) + L-proline + ATP = L-prolyl-tRNA(Pro) + AMP + diphosphate. Functionally, catalyzes the attachment of proline to tRNA(Pro) in a two-step reaction: proline is first activated by ATP to form Pro-AMP and then transferred to the acceptor end of tRNA(Pro). As ProRS can inadvertently accommodate and process non-cognate amino acids such as alanine and cysteine, to avoid such errors it has two additional distinct editing activities against alanine. One activity is designated as 'pretransfer' editing and involves the tRNA(Pro)-independent hydrolysis of activated Ala-AMP. The other activity is designated 'posttransfer' editing and involves deacylation of mischarged Ala-tRNA(Pro). The misacylated Cys-tRNA(Pro) is not edited by ProRS. The protein is Proline--tRNA ligase of Vesicomyosocius okutanii subsp. Calyptogena okutanii (strain HA).